Consider the following 249-residue polypeptide: Adenosylcobinamide-GDP ribazoletransferase (249 aa).

A run of 7 helical transmembrane segments spans residues 29-49 (LYWF…CAWL), 50-70 (PLSI…GFIV), 104-124 (VGSF…VAIL), 131-151 (AFAL…LLAA), 165-185 (GFVG…SLMM), 194-214 (PFLL…IGFL), and 226-246 (VLGA…GVAF).

It belongs to the CobS family. Requires Mg(2+) as cofactor.

It is found in the cell inner membrane. The enzyme catalyses alpha-ribazole + adenosylcob(III)inamide-GDP = adenosylcob(III)alamin + GMP + H(+). It catalyses the reaction alpha-ribazole 5'-phosphate + adenosylcob(III)inamide-GDP = adenosylcob(III)alamin 5'-phosphate + GMP + H(+). Its pathway is cofactor biosynthesis; adenosylcobalamin biosynthesis; adenosylcobalamin from cob(II)yrinate a,c-diamide: step 7/7. Functionally, joins adenosylcobinamide-GDP and alpha-ribazole to generate adenosylcobalamin (Ado-cobalamin). Also synthesizes adenosylcobalamin 5'-phosphate from adenosylcobinamide-GDP and alpha-ribazole 5'-phosphate. This chain is Adenosylcobinamide-GDP ribazoletransferase, found in Chlorobium phaeovibrioides (strain DSM 265 / 1930) (Prosthecochloris vibrioformis (strain DSM 265)).